Here is a 130-residue protein sequence, read N- to C-terminus: Small ribosomal subunit protein uS11 (130 aa).

This sequence belongs to the universal ribosomal protein uS11 family. Part of the 30S ribosomal subunit. Interacts with proteins S7 and S18. Binds to IF-3.

Functionally, located on the platform of the 30S subunit, it bridges several disparate RNA helices of the 16S rRNA. Forms part of the Shine-Dalgarno cleft in the 70S ribosome. This Caldicellulosiruptor bescii (strain ATCC BAA-1888 / DSM 6725 / KCTC 15123 / Z-1320) (Anaerocellum thermophilum) protein is Small ribosomal subunit protein uS11.